The following is a 689-amino-acid chain: Probable E3 ubiquitin ligase complex SCF subunit sconB (689 aa).

Composition is skewed to basic and acidic residues over residues 1-12 and 19-29; these read MDAHELSFRDGH and MKDECASEEKA. A disordered region spans residues 1–66; sequence MDAHELSFRD…STQDKPHSFN (66 aa). The 47-residue stretch at 186 to 232 folds into the F-box domain; sequence IDFLTALPPEISFKILCYLDTTSLCKAAQVSRRWRALADDDVVWHRM. The segment at 267–306 is disordered; the sequence is AATWDVSEQPAETESNSATIDTAASGSKRKPESDKEDTAM. A compositionally biased stretch (polar residues) spans 276-291; that stretch reads PAETESNSATIDTAAS. Residues 295–306 are compositionally biased toward basic and acidic residues; it reads RKPESDKEDTAM. 7 WD repeats span residues 358–395, 398–437, 439–475, 477–518, 572–615, 616–655, and 658–689; these read GHSNGIMCLQFEDNILATGSYDATIKIWDTETGEELRT, GHRSGIRCLQFDDTKLISGSMDHTLKVWNWRTGECISTYS, HRGGVVGLHFDATILASGSVDKTVKIWNFEDKSTCLL, GHTD…RTFH, DTPS…CLRT, FFGHLEGVWALAADTLRIVSGAEDRMVKIWDPRTGKCERT, and GHSGPVTCIGLGDSRFATGSEDCEVRMYSFQT.

Belongs to the WD repeat MET30/SCONB/SCON-2 family. As to quaternary structure, component of the SCF(sconB) E3 ubiquitin ligase complex.

It functions in the pathway protein modification; protein ubiquitination. In terms of biological role, component of the SCF(sconB) E3 ubiquitin ligase complex involved in the regulation of sulfur metabolite repression, probably by mediating the inactivation or degradation of the metR transcription factor. The sequence is that of Probable E3 ubiquitin ligase complex SCF subunit sconB (sconB) from Neosartorya fischeri (strain ATCC 1020 / DSM 3700 / CBS 544.65 / FGSC A1164 / JCM 1740 / NRRL 181 / WB 181) (Aspergillus fischerianus).